A 445-amino-acid polypeptide reads, in one-letter code: Mutanase Pc12g07500 (445 aa).

The first 21 residues, 1 to 21 (MIWKSLFSALAILTHILPALT), serve as a signal peptide directing secretion. 2 N-linked (GlcNAc...) asparagine glycosylation sites follow: N386 and N437.

It belongs to the glycosyl hydrolase 71 family. Monomer.

Its subcellular location is the secreted. The catalysed reaction is Endohydrolysis of (1-&gt;3)-alpha-D-glucosidic linkages in isolichenin, pseudonigeran and nigeran.. In terms of biological role, hydrolyzes 1,3-alpha-glucan predominantly into pentasaccharides. May enhance the efficacy of fungal antibiotics by degrading bacterial exopolysaccharides. This chain is Mutanase Pc12g07500, found in Penicillium rubens (strain ATCC 28089 / DSM 1075 / NRRL 1951 / Wisconsin 54-1255) (Penicillium chrysogenum).